Consider the following 173-residue polypeptide: NAD(P)H-quinone oxidoreductase subunit J (173 aa).

This sequence belongs to the complex I 30 kDa subunit family. NDH-1 can be composed of about 15 different subunits; different subcomplexes with different compositions have been identified which probably have different functions.

The protein localises to the cellular thylakoid membrane. The enzyme catalyses a plastoquinone + NADH + (n+1) H(+)(in) = a plastoquinol + NAD(+) + n H(+)(out). The catalysed reaction is a plastoquinone + NADPH + (n+1) H(+)(in) = a plastoquinol + NADP(+) + n H(+)(out). Its function is as follows. NDH-1 shuttles electrons from an unknown electron donor, via FMN and iron-sulfur (Fe-S) centers, to quinones in the respiratory and/or the photosynthetic chain. The immediate electron acceptor for the enzyme in this species is believed to be plastoquinone. Couples the redox reaction to proton translocation, and thus conserves the redox energy in a proton gradient. Cyanobacterial NDH-1 also plays a role in inorganic carbon-concentration. This chain is NAD(P)H-quinone oxidoreductase subunit J, found in Prochlorococcus marinus (strain NATL2A).